Here is a 397-residue protein sequence, read N- to C-terminus: MKPLLVLLLLLLLDLAQAQGALHRVPLRRHQSLRKKLRAQGQLSEFWRSHNLDMTRLSESCNVYSSVNEPLINYLDMEYFGTISIGTPPQNFTVIFDTGSSNLWVPSVYCTSPACKAHPVFHPSQSDTYTEVGNHFSIQYGTGSLTGIIGADQVSVEGLTVDGQQFGESVKEPGQTFVNAEFDGILGLGYPSLAAGGVTPVFDNMMAQNLVALPMFSVYLSSDPQGGSGSELTFGGYDPSHFSGSLNWIPVTKQAYWQIALDGIQVGDTVMFCSEGCQAIVDTGTSLITGPPDKIKQLQEAIGATPIDGEYAVDCATLDTMPNVTFLINEVSYTLNPTDYILPDLVEGMQFCGSGFQGLDIPPPAGPLWILGDVFIRQFYSVFDRGNNQVGLAPAVP.

A signal peptide spans 1-20; it reads MKPLLVLLLLLLLDLAQAQG. A propeptide spans 21–59 (activation peptide); the sequence is ALHRVPLRRHQSLRKKLRAQGQLSEFWRSHNLDMTRLSE. In terms of domain architecture, Peptidase A1 spans 79–393; the sequence is YFGTISIGTP…DRGNNQVGLA (315 aa). An N-linked (GlcNAc...) asparagine glycan is attached at Asn-91. Asp-97 is a catalytic residue. 2 disulfides stabilise this stretch: Cys-110–Cys-115 and Cys-273–Cys-277. Residue Asp-282 is part of the active site. N-linked (GlcNAc...) asparagine glycosylation is present at Asn-323.

Belongs to the peptidase A1 family. As to quaternary structure, homodimer; disulfide-linked. In terms of processing, glycosylated. The nature of the carbohydrate chain varies between cell types. In fibroblasts, the proenzyme contains a high mannose-type oligosaccharide, while the mature enzyme contains a complex-type oligosaccharide. Expressed abundantly in the stomach, club cells and alveolar macrophages of the lung, brain microglia, spleen and activated B-lymphocytes. Not expressed in resting B-lymphocytes.

The protein resides in the endosome. It carries out the reaction Similar to cathepsin D, but slightly broader specificity.. In terms of biological role, may have a role in immune function. Probably involved in the processing of antigenic peptides during MHC class II-mediated antigen presentation. May play a role in activation-induced lymphocyte depletion in the thymus, and in neuronal degeneration and glial cell activation in the brain. The sequence is that of Cathepsin E (Ctse) from Mus musculus (Mouse).